Here is a 534-residue protein sequence, read N- to C-terminus: Dual specificity calcium/calmodulin-dependent 3',5'-cyclic nucleotide phosphodiesterase 1B (534 aa).

Residues 1-21 (MELSPRSPPEMLESDCPSPLE) form a disordered region. Ser-7 and Ser-14 each carry phosphoserine. Calmodulin-binding stretches follow at residues 27 to 47 (SKKM…QLEN) and 116 to 139 (EKPK…MFRR). The PDEase domain occupies 144–501 (VGPTYSTAVL…QKWKERAASG (358 aa)). His-221 acts as the Proton donor in catalysis. Residues His-225, His-261, Asp-262, and Asp-368 each contribute to the Zn(2+) site. Asp-262 serves as a coordination point for Mg(2+). Disordered stretches follow at residues 442–473 (VQPT…GDPN) and 494–534 (WKER…GNLD). Over residues 453-462 (KNQPSFQWRQ) the composition is skewed to polar residues. 2 positions are modified to phosphoserine: Ser-464 and Ser-512.

Belongs to the cyclic nucleotide phosphodiesterase family. PDE1 subfamily. In terms of assembly, homodimer. Zn(2+) is required as a cofactor. It depends on Mg(2+) as a cofactor. As to expression, expressed in central nervous system regions. Most abundant in basal ganglia. Also found in kidney papilla and adrenal medulla.

It is found in the cytoplasm. The protein resides in the cytosol. It catalyses the reaction a nucleoside 3',5'-cyclic phosphate + H2O = a nucleoside 5'-phosphate + H(+). The catalysed reaction is 3',5'-cyclic GMP + H2O = GMP + H(+). The enzyme catalyses 3',5'-cyclic AMP + H2O = AMP + H(+). Its activity is regulated as follows. Type I PDE are activated by the binding of calmodulin in the presence of Ca(2+). Cyclic nucleotide phosphodiesterase with a dual specificity for the second messengers cAMP and cGMP, which are key regulators of many important physiological processes. Has a preference for cGMP as a substrate. The chain is Dual specificity calcium/calmodulin-dependent 3',5'-cyclic nucleotide phosphodiesterase 1B from Bos taurus (Bovine).